Reading from the N-terminus, the 354-residue chain is Probable DNA repair protein RAD51 homolog 4 (354 aa).

Residue 115–122 (GNTSCGKT) coordinates ATP.

This sequence belongs to the RecA family. RAD51 subfamily.

Its subcellular location is the nucleus. Involved in the homologous recombination repair (HRR) pathway of double-stranded DNA breaks arising during DNA replication or induced by DNA-damaging agents. This is Probable DNA repair protein RAD51 homolog 4 (rad51d) from Dictyostelium discoideum (Social amoeba).